The primary structure comprises 1939 residues: Myosin-1 (1939 aa).

Positions 33 to 82 constitute a Myosin N-terminal SH3-like domain; it reads DAKTSVFVAEPKESFVKGTVQSREGGKVTVKTEAGATLTVKEDQVFPMNP. 2 positions are modified to phosphothreonine: T64 and T69. The Myosin motor domain occupies 86-782; the sequence is DKIEDMAMMT…LLGLLEEMRD (697 aa). An N6,N6,N6-trimethyllysine modification is found at K130. 179-186 contacts ATP; the sequence is GESGAGKT. Y389 bears the Phosphotyrosine mark. Position 419 is a phosphothreonine (T419). Phosphotyrosine is present on Y424. Residues 659–681 form an actin-binding region; sequence LNKLMTNLRSTHPHFVRCIIPNE. Position 757 is a pros-methylhistidine (H757). Positions 761–775 are actin-binding; that stretch reads KFGHTKVFFKAGLLG. Positions 785-814 constitute an IQ domain; the sequence is LAQLITRTQARCRGFLARVEYQKMVERRES. The stretch at 843–1939 forms a coiled coil; sequence LLKSAETEKE…EVHTKIISEE (1097 aa). Phosphoserine occurs at positions 1092 and 1096. 2 disordered regions span residues 1125 to 1147 and 1153 to 1172; these read EIEA…SREL and RLEE…KKRE. The segment covering 1128-1147 has biased composition (basic and acidic residues); that stretch reads AERASRAKAEKQRSDLSREL. S1162 and S1237 each carry phosphoserine. T1241 carries the post-translational modification Phosphothreonine. S1243 is subject to Phosphoserine. T1255 bears the Phosphothreonine mark. S1261 is subject to Phosphoserine. Phosphothreonine is present on residues T1265 and T1286. S1288, S1292, S1303, and S1306 each carry phosphoserine. Residue Y1464 is modified to Phosphotyrosine. At T1467 the chain carries Phosphothreonine. The residue at position 1474 (S1474) is a Phosphoserine. At Y1492 the chain carries Phosphotyrosine. A Phosphoserine modification is found at S1495. T1501 carries the post-translational modification Phosphothreonine. S1514 bears the Phosphoserine mark. T1517 is subject to Phosphothreonine. Phosphoserine occurs at positions 1542, 1554, 1574, 1600, 1603, 1714, and 1726. 2 positions are modified to phosphothreonine: T1730 and T1736. Position 1739 is a phosphoserine (S1739).

The protein belongs to the TRAFAC class myosin-kinesin ATPase superfamily. Myosin family. Muscle myosin is a hexameric protein that consists of 2 heavy chain subunits (MHC), 2 alkali light chain subunits (MLC) and 2 regulatory light chain subunits (MLC-2). Interacts with SLC26A5.

It localises to the cytoplasm. It is found in the myofibril. Functionally, required for normal hearing. It plays a role in cochlear amplification of auditory stimuli, likely through the positive regulation of prestin (SLC26A5) activity and outer hair cell (OHC) electromotility. This chain is Myosin-1 (MYH1), found in Sus scrofa (Pig).